Here is a 156-residue protein sequence, read N- to C-terminus: MSRRSTAEKETAKSDPIYRNRLVNMLVNRILRHGKKSLAYRILYRAMKNIQQKTEKNPLSVLRQAIRGVTPNVTVKARRVGGSTYQVPIEIRSTQGKALAIRWSLGASRKRPPGRNMAFKLSYELMDAARENGNAIRKKEEAHRMAEANRAFAHFR.

The protein belongs to the universal ribosomal protein uS7 family. Part of the 30S ribosomal subunit.

It is found in the plastid. The protein localises to the chloroplast. Its function is as follows. One of the primary rRNA binding proteins, it binds directly to 16S rRNA where it nucleates assembly of the head domain of the 30S subunit. The polypeptide is Small ribosomal subunit protein uS7c (rps7) (Bowenia serrulata (Byfield fern)).